Reading from the N-terminus, the 360-residue chain is Protein Wnt-2 (360 aa).

Positions 1-25 are cleaved as a signal peptide; sequence MNAPLGGIWLWLPLLLTWLTPEVSS. Disulfide bonds link cysteine 76–cysteine 87, cysteine 127–cysteine 135, cysteine 137–cysteine 157, cysteine 206–cysteine 220, cysteine 208–cysteine 215, cysteine 278–cysteine 309, cysteine 294–cysteine 304, cysteine 308–cysteine 348, cysteine 324–cysteine 339, cysteine 326–cysteine 336, and cysteine 331–cysteine 332. Residue serine 212 is the site of O-palmitoleoyl serine; by PORCN attachment. An N-linked (GlcNAc...) asparagine glycan is attached at asparagine 295.

This sequence belongs to the Wnt family. Palmitoleoylation is required for efficient binding to frizzled receptors. Depalmitoleoylation leads to Wnt signaling pathway inhibition.

The protein resides in the secreted. Its subcellular location is the extracellular space. It is found in the extracellular matrix. In terms of biological role, ligand for members of the frizzled family of seven transmembrane receptors. Functions in the canonical Wnt signaling pathway that results in activation of transcription factors of the TCF/LEF family. The chain is Protein Wnt-2 (WNT2) from Dasypus novemcinctus (Nine-banded armadillo).